The chain runs to 283 residues: Tyrosine recombinase THA_404 (283 aa).

The 86-residue stretch at 1 to 86 folds into the Core-binding (CB) domain; it reads MDKVIEMFSD…SLNSFFNYLE (86 aa). Residues 107–281 enclose the Tyr recombinase domain; it reads KIPDFLTEDE…ADQEKFDAVK (175 aa). Active-site residues include Arg-145, Lys-170, His-233, Arg-236, and His-259. Residue Tyr-268 is the O-(3'-phospho-DNA)-tyrosine intermediate of the active site.

This sequence belongs to the 'phage' integrase family.

The protein resides in the cytoplasm. In terms of biological role, site-specific tyrosine recombinase, which acts by catalyzing the cutting and rejoining of the recombining DNA molecules. The sequence is that of Tyrosine recombinase THA_404 from Thermosipho africanus (strain TCF52B).